The primary structure comprises 361 residues: Chorismate synthase (361 aa).

NADP(+)-binding residues include Arg48 and Arg54. FMN contacts are provided by residues 125-127, 238-239, Gly278, 293-297, and Arg319; these read RSS, NA, and KPTSS.

Belongs to the chorismate synthase family. Homotetramer. FMNH2 is required as a cofactor.

It catalyses the reaction 5-O-(1-carboxyvinyl)-3-phosphoshikimate = chorismate + phosphate. It functions in the pathway metabolic intermediate biosynthesis; chorismate biosynthesis; chorismate from D-erythrose 4-phosphate and phosphoenolpyruvate: step 7/7. In terms of biological role, catalyzes the anti-1,4-elimination of the C-3 phosphate and the C-6 proR hydrogen from 5-enolpyruvylshikimate-3-phosphate (EPSP) to yield chorismate, which is the branch point compound that serves as the starting substrate for the three terminal pathways of aromatic amino acid biosynthesis. This reaction introduces a second double bond into the aromatic ring system. The protein is Chorismate synthase of Salmonella paratyphi A (strain ATCC 9150 / SARB42).